The primary structure comprises 527 residues: Phosphoenolpyruvate carboxykinase (ATP) (527 aa).

3 residues coordinate substrate: Arg-56, Tyr-192, and Lys-198. ATP contacts are provided by residues Lys-198, His-217, and 233–241 (GLSGTGKTT). 2 residues coordinate Mn(2+): Lys-198 and His-217. Asp-254 lines the Mn(2+) pocket. Residues Glu-282, Arg-319, and Thr-444 each contribute to the ATP site. Arg-319 is a binding site for substrate.

Belongs to the phosphoenolpyruvate carboxykinase (ATP) family. Requires Mn(2+) as cofactor.

The protein localises to the cytoplasm. It carries out the reaction oxaloacetate + ATP = phosphoenolpyruvate + ADP + CO2. It participates in carbohydrate biosynthesis; gluconeogenesis. In terms of biological role, involved in the gluconeogenesis. Catalyzes the conversion of oxaloacetate (OAA) to phosphoenolpyruvate (PEP) through direct phosphoryl transfer between the nucleoside triphosphate and OAA. The protein is Phosphoenolpyruvate carboxykinase (ATP) of Bacillus subtilis (strain 168).